A 518-amino-acid polypeptide reads, in one-letter code: Glutamate--cysteine ligase (518 aa).

Belongs to the glutamate--cysteine ligase type 1 family. Type 1 subfamily.

The catalysed reaction is L-cysteine + L-glutamate + ATP = gamma-L-glutamyl-L-cysteine + ADP + phosphate + H(+). The protein operates within sulfur metabolism; glutathione biosynthesis; glutathione from L-cysteine and L-glutamate: step 1/2. This Salmonella typhi protein is Glutamate--cysteine ligase.